The following is a 143-amino-acid chain: Large ribosomal subunit protein uL15 (143 aa).

The protein belongs to the universal ribosomal protein uL15 family. As to quaternary structure, part of the 50S ribosomal subunit.

In terms of biological role, binds to the 23S rRNA. This Methanococcus aeolicus (strain ATCC BAA-1280 / DSM 17508 / OCM 812 / Nankai-3) protein is Large ribosomal subunit protein uL15.